The chain runs to 102 residues: Protein translation factor SUI1 homolog (102 aa).

Belongs to the SUI1 family.

The polypeptide is Protein translation factor SUI1 homolog (Methanococcus maripaludis (strain C5 / ATCC BAA-1333)).